The primary structure comprises 391 residues: Small ribosomal subunit protein bS1 (391 aa).

S1 motif domains are found at residues 16-90 (GDKV…LSRR), 108-173 (NEII…LSRK), 194-262 (GDVI…LSIK), and 279-348 (NDVI…LSIK).

Belongs to the bacterial ribosomal protein bS1 family.

Functionally, binds mRNA; thus facilitating recognition of the initiation point. It is needed to translate mRNA with a short Shine-Dalgarno (SD) purine-rich sequence. This Staphylococcus aureus (strain MSSA476) protein is Small ribosomal subunit protein bS1 (rpsA).